We begin with the raw amino-acid sequence, 159 residues long: Ribose-5-phosphate isomerase B (159 aa).

D-ribulose 5-phosphate-binding positions include 8–9 and 67–71; these read DH and GSGNG. The active-site Proton acceptor is the Glu-72. The active-site Proton donor is the His-99. Residues Asn-100, Arg-110, Arg-134, and Arg-138 each contribute to the D-ribulose 5-phosphate site.

It belongs to the LacAB/RpiB family. Homodimer.

The enzyme catalyses aldehydo-D-ribose 5-phosphate = D-ribulose 5-phosphate. It participates in carbohydrate degradation; pentose phosphate pathway; D-ribose 5-phosphate from D-ribulose 5-phosphate (non-oxidative stage): step 1/1. Catalyzes the interconversion of ribulose-5-P and ribose-5-P. This Mycolicibacterium paratuberculosis (strain ATCC BAA-968 / K-10) (Mycobacterium paratuberculosis) protein is Ribose-5-phosphate isomerase B.